The sequence spans 236 residues: Biosynthetic peptidoglycan transglycosylase (236 aa).

A helical transmembrane segment spans residues 12 to 31 (ALLWFVAGSIVLVLVFRWVP).

This sequence belongs to the glycosyltransferase 51 family.

It localises to the cell inner membrane. It carries out the reaction [GlcNAc-(1-&gt;4)-Mur2Ac(oyl-L-Ala-gamma-D-Glu-L-Lys-D-Ala-D-Ala)](n)-di-trans,octa-cis-undecaprenyl diphosphate + beta-D-GlcNAc-(1-&gt;4)-Mur2Ac(oyl-L-Ala-gamma-D-Glu-L-Lys-D-Ala-D-Ala)-di-trans,octa-cis-undecaprenyl diphosphate = [GlcNAc-(1-&gt;4)-Mur2Ac(oyl-L-Ala-gamma-D-Glu-L-Lys-D-Ala-D-Ala)](n+1)-di-trans,octa-cis-undecaprenyl diphosphate + di-trans,octa-cis-undecaprenyl diphosphate + H(+). It functions in the pathway cell wall biogenesis; peptidoglycan biosynthesis. Its function is as follows. Peptidoglycan polymerase that catalyzes glycan chain elongation from lipid-linked precursors. The sequence is that of Biosynthetic peptidoglycan transglycosylase from Pseudomonas putida (strain ATCC 700007 / DSM 6899 / JCM 31910 / BCRC 17059 / LMG 24140 / F1).